Here is an 88-residue protein sequence, read N- to C-terminus: Small ribosomal subunit protein uS15 (88 aa).

It belongs to the universal ribosomal protein uS15 family. In terms of assembly, part of the 30S ribosomal subunit. Forms a bridge to the 50S subunit in the 70S ribosome, contacting the 23S rRNA.

Its function is as follows. One of the primary rRNA binding proteins, it binds directly to 16S rRNA where it helps nucleate assembly of the platform of the 30S subunit by binding and bridging several RNA helices of the 16S rRNA. Forms an intersubunit bridge (bridge B4) with the 23S rRNA of the 50S subunit in the ribosome. The sequence is that of Small ribosomal subunit protein uS15 from Borrelia hermsii (strain HS1 / DAH).